A 901-amino-acid polypeptide reads, in one-letter code: MMMVMQPEGLGAGEGRFAGGGGGGEYMEQEEDWDRDLLLDPAWEKQQRKTFTAWCNSHLRKAGTQIENIEEDFRNGLKLMLLLEVISGERLPRPDKGKMRFHKIANVNKALDFIASKGVKLVSIGAEEIVDGNLKMTLGMIWTIILRFAIQDISVEETSAKEGLLLWCQRKTAPYRNVNVQNFHTSWKDGLALCALIHRHRPDLIDYAKLRKDDPIGNLNTAFEVAEKYLDIPKMLDAEDIVNTPKPDEKAIMTYVSCFYHAFAGAEQAETAANRICKVLAVNQENEKLMEEYEKLASELLEWIRRTVPWLENRVGEPSMSAMQRKLEDFRDYRRLHKPPRIQEKCQLEINFNTLQTKLRLSHRPAFMPSEGKLVSDIANAWRGLEQVEKGYEDWLLSEIRRLQRLQHLAEKFRQKASLHEAWTRGKEEMLSQRDYDSALLQEVRALLRRHEAFESDLAAHQDRVEHIAALAQELNELDYHEAASVNSRCQAICDQWDNLGTLTQKRRDALERMEKLLETIDRLQLEFARRAAPFNNWLDGAVEDLQDVWLVHSVEETQSLLTAHDQFKATLPEADRERGAIMGIQGEIQKICQTYGLRPCSTNPYITLSPQDINTKWDMVRKLVPSCDQTLQEELARQQVNERLRRQFAAQANAIGPWIQAKVEEVGRLAAGLAGSLEEQMAGLRQQEQNIINYKTNIDRLEGDHQLLQESLVFDNKHTVYSMEHIRVGWEQLLTSIARTINEVENQVLTRDAKGLSQEQLNEFRASFNHFDRKQNGMMEPDDFRACLISMGYDLGEVEFARIMTMVDPNAAGVVTFQAFIDFMTRETAETDTTEQVVASFKILAGDKNYITPEELRRELPAKQAEYCIRRMVPYKGSGAPAGALDYVAFSSALYGESDL.

Met1 carries the N-acetylmethionine modification. The segment at 1-261 is actin-binding; the sequence is MMMVMQPEGL…IMTYVSCFYH (261 aa). Calponin-homology (CH) domains follow at residues 45 to 149 and 158 to 264; these read KQQR…LRFA and TSAK…HAFA. 4 Spectrin repeats span residues 288-398, 408-513, 523-634, and 644-747; these read KLME…WLLS, HLAE…ALER, RLQL…TLQE, and RLRR…EVEN. 2 consecutive EF-hand domains span residues 760–795 and 796–831; these read EQLN…MGYD and LGEV…ETAE. Positions 773, 777, 779, 784, 809, and 811 each coordinate Ca(2+).

It belongs to the alpha-actinin family. As to quaternary structure, homodimer; antiparallel. Also forms heterodimers with ACTN2. Interacts with MYOZ1. As to expression, expression restricted to fast (type 2) skeletal muscle fibers (at protein level).

F-actin cross-linking protein which is thought to anchor actin to a variety of intracellular structures. This is a bundling protein. This chain is Alpha-actinin-3 (ACTN3), found in Homo sapiens (Human).